A 273-amino-acid chain; its full sequence is Anthranilate synthase beta subunit 2, chloroplastic (273 aa).

A chloroplast-targeting transit peptide spans 1–47; that stretch reads MATAARLLPKIQSPASPAVAEARRRRPSSLRLGVTSGPARTLKQKLV. The disordered stretch occupies residues 15–35; sequence ASPAVAEARRRRPSSLRLGVT. A Glutamine amidotransferase type-1 domain is found at 70 to 269; that stretch reads PIIVIDNYDS…IKIIEGYEAL (200 aa). Position 121–123 (121–123) interacts with L-glutamine; sequence GPG. Cys148 functions as the Nucleophile in the catalytic mechanism. L-glutamine-binding positions include Gln152 and 202–203; that span reads SL. Active-site residues include His243 and Glu245.

In terms of assembly, heterotetramer consisting of two non-identical subunits: a beta subunit and a large alpha subunit. As to expression, expressed in roots and leaves.

Its subcellular location is the plastid. It localises to the chloroplast. It carries out the reaction chorismate + L-glutamine = anthranilate + pyruvate + L-glutamate + H(+). The protein operates within amino-acid biosynthesis; L-tryptophan biosynthesis; L-tryptophan from chorismate: step 1/5. Functionally, part of a heterotetrameric complex that catalyzes the two-step biosynthesis of anthranilate, an intermediate in the biosynthesis of L-tryptophan. In the first step, the glutamine-binding beta subunit of anthranilate synthase (AS) provides the glutamine amidotransferase activity which generates ammonia as a substrate that, along with chorismate, is used in the second step, catalyzed by the large alpha subunit of AS to produce anthranilate. The sequence is that of Anthranilate synthase beta subunit 2, chloroplastic from Oryza sativa subsp. japonica (Rice).